The following is a 204-amino-acid chain: Phosphoheptose isomerase (204 aa).

Residues 38-199 (MAVALARGGK…LFEAVMELGP (162 aa)) enclose the SIS domain. 53–55 (NGG) is a substrate binding site. The Zn(2+) site is built by histidine 62 and glutamate 66. Residues glutamate 66, 95–96 (ND), 121–123 (STS), serine 126, and glutamine 172 each bind substrate. Zn(2+) is bound by residues glutamine 172 and histidine 180.

It belongs to the SIS family. GmhA subfamily. In terms of assembly, homotetramer. Requires Zn(2+) as cofactor.

The protein localises to the cytoplasm. It catalyses the reaction 2 D-sedoheptulose 7-phosphate = D-glycero-alpha-D-manno-heptose 7-phosphate + D-glycero-beta-D-manno-heptose 7-phosphate. It participates in carbohydrate biosynthesis; D-glycero-D-manno-heptose 7-phosphate biosynthesis; D-glycero-alpha-D-manno-heptose 7-phosphate and D-glycero-beta-D-manno-heptose 7-phosphate from sedoheptulose 7-phosphate: step 1/1. Functionally, catalyzes the isomerization of sedoheptulose 7-phosphate in D-glycero-D-manno-heptose 7-phosphate. In Solidesulfovibrio magneticus (strain ATCC 700980 / DSM 13731 / RS-1) (Desulfovibrio magneticus), this protein is Phosphoheptose isomerase.